Reading from the N-terminus, the 295-residue chain is Light-independent protochlorophyllide reductase iron-sulfur ATP-binding protein (295 aa).

Residues 39–44 (GIGKST) and K68 each bind ATP. Residue S43 coordinates Mg(2+). 2 residues coordinate [4Fe-4S] cluster: C124 and C158. Residue 209 to 210 (NR) coordinates ATP.

It belongs to the NifH/BchL/ChlL family. In terms of assembly, homodimer. Protochlorophyllide reductase is composed of three subunits; ChlL, ChlN and ChlB. The cofactor is [4Fe-4S] cluster.

The enzyme catalyses chlorophyllide a + oxidized 2[4Fe-4S]-[ferredoxin] + 2 ADP + 2 phosphate = protochlorophyllide a + reduced 2[4Fe-4S]-[ferredoxin] + 2 ATP + 2 H2O. Its pathway is porphyrin-containing compound metabolism; chlorophyll biosynthesis (light-independent). In terms of biological role, component of the dark-operative protochlorophyllide reductase (DPOR) that uses Mg-ATP and reduced ferredoxin to reduce ring D of protochlorophyllide (Pchlide) to form chlorophyllide a (Chlide). This reaction is light-independent. The L component serves as a unique electron donor to the NB-component of the complex, and binds Mg-ATP. The sequence is that of Light-independent protochlorophyllide reductase iron-sulfur ATP-binding protein from Prochlorococcus marinus (strain MIT 9301).